Consider the following 3066-residue polypeptide: MATIMIGSMAISVPNTHVSRASNSVMPVQAVQMAKQVPSARGVLYTLKREGSTQVIKHEEALRKFQEAFDQDVGIQRRLLVNKHSSIQSTKEGWFDLASLNFRAGSSKEAAIARRKQEEEDFLNGKYEQQFYAGVSATKSMKFEGGSVGFRTKYWRPTPKKTKERRATSQCRKPTYVLEEVLSIASKSGKLVEFITGKGKRVKVCYVRKHGAILPKFSLPHEEGKYIHQELQYASTYEFLPYICMFAKYKSINADDITYGDSGLLFDERSSLTTNHTKLPYFVVRGRRNGKLVNALEVVENMEDIQHYSQNPEAQFFRGWKKVFDKMPPHVENHECTIDFTNEQCGELAAAISQSIFPVKKLSCKQCRQHIKHLSWEEYKQFLLAHMGCHGAEWETFQEIDGMRYVKRVIETSTAENASLQTSLEIVRLTQNYKSTHMLQIQDINKALMKGPSVTQSELEQASKQLLAMTQWWKNHMALTDEDALKVFRNKRSSKALLNPSLLCDNQLDKNGNFVWGERGRHSKRFFANYFEEVVPSEGYSKYVIRTNPNGQRELAIGSLIVPLDFERARMALQGKSVTREPITMSCISRQDGNFVYPCCCVTHDDGKAFYSELKSPTKRHLVIGTSGDPKYIDLPATDADRMYIAKEGFCYLNIFLAMLVNVNEDEAKDFTKMVRDVIVPRLGKWPTMLDVATAAYMLTVFHPETRNAELPRILVDHACQTMHVIDSFGSLTVGYHVLKAGTVNQLIQFASNDLQSEMKFYRVGGEVQQRMKCETALITSIFKPKRMIQILENDPYILLMGLVSPSILIHMYRMKHFEKGVELWISKEHSVAKIFIILGQLTKRVAANDVLLEQLEMISETSERFMSILEDCPQAPHSYKTAKDLLTMYIEGKASNNQLVENGFVDMNDKLYMAYEKIYSDRLKQEWRALSWLEKFSITWQLKRFAPHTEKCLTKKVVEESSASSGNFASVCFMNAQSHLRNVRNTLFQKCDQVWTASVRAFVRLIISTLHRCYSDIVYLVNICIIFSLLVQMTSVLQGIVNTARRDKALLSGWKRKEDEEAVIHLYEMCEKMEGGHPSIEKFLDHVKGVRPDLLPVAVSMTGQSEDVSAQAKTATQLQLEKIVAFMALLTMCIDNERSDAVFKVLSKLKAFFSTMGEDVKVQSLDEIQSIDEDKKLTIDFDLETNKESSSVSFDVKFEAWWNRQLEQNRVIPHYRSTGEFLEFTRETAAKIANLVATSSHTEFLIRGAVGSGKSTGLPHHLSRKGKVLLLEPTRPLAENVSKQLSFEPFYHNVTLRMRGLSKFGSSNIVVMTSGFAFHYYFNNPQQLSDFDFIIIDECHVQDSPTIAFNCALKEFEFSGKLIKVSATTPGRECEFTTQHPVKLKVEDHLSFQNFVQAQGTGSNADMIQHGNNLLVYVASYNEVDQLSRLLTEKHYKVTKVDGRTMQMGNVEIATTGTEVKPHFIVATNIIENGVTLDIDCVIDFGLKVVATLDTDNRCVRYNKQSVSYGERIQRLGRVGRCKPGFALRIGHTGKGVEEVPEFIATEAAFLSFAYGLPVTTQSVSTNILSRCTVKQARVALNFELTPFFTTNFIKYDGSMHVIDTRLLKSYKLRESEMLLTKLAIPYQFVGQWVTVKEYERQGIHLNCPEKVKIPFYVHGIPDKLYEMLWDTVCKYKNDAGFGSVKSVNATKISYTLSTDPTAIPRTLAILDHLLSEEMTKKSHFDTIGSAVTGYSFSLAGIADGFRKRYLKDYTQHNIAVLQQAKAQLLEFDCNKVDINNLHNVEGIGILNAVQLQSKHEVSKFLQLKGKWDGKKFMNDAVVAIFTLVGGGWMLWDYFTRVIREPVSTQGKKRQIQKLKFRDAFDRKIGREVYADDYTMEHRFGEAYTKKGKQKGSTRTKGMGRKSRNFIHLYGVEPENYSMIRFVDPLTGHTMDEHPRVDIRMVQQEFEEIRKDMIGEGELDRQRVYHNPGLQAYFIGKNTEEALKVDLTPHRPTLLCQNSNAIAGFPEREDELRQTGLPQVVSKSDVPRAKERVEMESKSVYKGLRDYSGISTLICQLTNSSDGHKETMFGVGYGSFIITNGHLFRRNNGMLTVKTWHGEFVIHNTTQLKIHFIQGRDVILIRMPKDFPPFGKRNLFRQPKREERVCMVGTNFQEKSLRATVSESSMILPEGKGSFWIHWITTQDGFCGLPLVSVNDGHIVGIHGLTSNDSEKNFFVPLTDGFEKEYLENADNLSWDKHWFWEPSKIAWGSLNLVEEQPKEEFKISKLVSDLFGNTVTVQGRKERWVLDAMEGNLAACGQDDSALVTKHVVKGKCPYFAQYLSVNQEAKSFFEPLMGAYQPSRLNKDAFKRGFFKYNKPVVLNEVDFQSFERAVAGVKLMMMEFDFKECVYVTDPDEIYDSLNMKAAVGAQYKGKKQDYFSGMDSFDKERLLYLSCERLFYGEKGVWNGSLKAELRPIEKVQANKTRTFTAAPIDTLLGAKVCVDDFNNQFYSLNLTCPWTVGMTKFYRGWDKLMRSLPDGWVYCHADGSQFDSSLTPLLLNAVLDVRSFFMEDWWVGREMLENLYAEIVYTPILAPDGTIFKKFRGNNSGQPSTVVDNTLMVVIALYYSGCKQGWSEEDIQERLVFFANGDDIILAVSDKDTWLYDTLSTSFAELGLNYNFEERTKKREELWFMSHKAMLVDGIYIPKLEPERIVSILEWDRSKELMHRTEAICASMIEAWGYTELLQEIRKFYLWLLNKDEFKELASSGKAPYIAETALRKLYTDVNAQTSELQRYLEVLDFTHADDCCESVSLQSGKEKEGDMDAGKDPKKSTSSSKGAGTSSKDVNVGSKGKVVPRLQKITRKMNLPMVEGKIILSLDHLLEYKPNQVDLFNTRATRTQFEAWYNAVKDEYELDDEQMGVVMNGFMVWCIDNGTSPDANGVWVMMDGEEQIEYPLKPIVENAKPTLRQIMHHFSDAAEAYIEMRNSESPYMPRYGLLRNLRDRELARYAFDFYEVTSKTPNRAREAIAQMKAAALSGVNNKLFGLDGNISTNSENTERHTARDVNQNMHTLLGMGPPQ.

One can recognise a Peptidase S30 domain in the interval 168–308 (TSQCRKPTYV…VENMEDIQHY (141 aa)). Active-site for P1 proteinase activity residues include His221, Glu230, and Ser262. The Involved in interaction with stylet and aphid transmission signature appears at 361–364 (KLSC). Residues 617-619 (PTK) carry the Involved in virions binding and aphid transmission motif. A Peptidase C6 domain is found at 643-765 (MYIAKEGFCY…QSEMKFYRVG (123 aa)). Active-site for helper component proteinase activity residues include Cys651 and His724. The 153-residue stretch at 1236-1388 (LVATSSHTEF…TQHPVKLKVE (153 aa)) folds into the Helicase ATP-binding domain. Residue 1249-1256 (GAVGSGKS) coordinates ATP. Positions 1338-1341 (DECH) match the DECH box motif. The 160-residue stretch at 1407-1566 (DMIQHGNNLL…GLPVTTQSVS (160 aa)) folds into the Helicase C-terminal domain. The short motif at 1891-1900 (KKGKQKGSTR) is the Nuclear localization signal element. Residue Tyr1915 is modified to O-(5'-phospho-RNA)-tyrosine. The 219-residue stretch at 2042-2260 (SKSVYKGLRD…IAWGSLNLVE (219 aa)) folds into the Peptidase C4 domain. Active-site for nuclear inclusion protein A activity residues include His2087, Asp2122, and Cys2192. A RdRp catalytic domain is found at 2526-2650 (WVYCHADGSQ…AVSDKDTWLY (125 aa)). The disordered stretch occupies residues 2799-2836 (SLQSGKEKEGDMDAGKDPKKSTSSSKGAGTSSKDVNVG). Positions 2803–2818 (GKEKEGDMDAGKDPKK) are enriched in basic and acidic residues. The segment covering 2819–2831 (STSSSKGAGTSSK) has biased composition (low complexity). Position 3048 is a phosphothreonine (Thr3048).

The protein belongs to the potyviridae genome polyprotein family. As to quaternary structure, interacts with host eIF4E protein (via cap-binding region); this interaction mediates the translation of the VPg-viral RNA conjugates. Part of a complex that comprises VPg, RNA, host EIF4E and EIF4G; this interaction mediates the translation of the VPg-viral RNA conjugates. Post-translationally, VPg is uridylylated by the polymerase and is covalently attached to the 5'-end of the genomic RNA. This uridylylated form acts as a nucleotide-peptide primer for the polymerase. Potyviral RNA is expressed as two polyproteins which undergo post-translational proteolytic processing. Genome polyprotein is processed by NIa-pro, P1 and HC-pro proteinases resulting in the production of at least ten individual proteins. P3N-PIPO polyprotein is cleaved by P1 and HC-pro proteinases resulting in the production of three individual proteins. The P1 proteinase and the HC-pro cleave only their respective C-termini autocatalytically. 6K1 is essential for proper proteolytic separation of P3 from CI.

It is found in the host cytoplasmic vesicle. Its subcellular location is the host nucleus. The protein localises to the virion. The enzyme catalyses RNA(n) + a ribonucleoside 5'-triphosphate = RNA(n+1) + diphosphate. It catalyses the reaction Hydrolyzes glutaminyl bonds, and activity is further restricted by preferences for the amino acids in P6 - P1' that vary with the species of potyvirus, e.g. Glu-Xaa-Xaa-Tyr-Xaa-Gln-|-(Ser or Gly) for the enzyme from tobacco etch virus. The natural substrate is the viral polyprotein, but other proteins and oligopeptides containing the appropriate consensus sequence are also cleaved.. The catalysed reaction is Hydrolyzes a Gly-|-Gly bond at its own C-terminus, commonly in the sequence -Tyr-Xaa-Val-Gly-|-Gly, in the processing of the potyviral polyprotein.. Functionally, required for aphid transmission and also has proteolytic activity. Only cleaves a Gly-Gly dipeptide at its own C-terminus. Interacts with virions and aphid stylets. Acts as a suppressor of RNA-mediated gene silencing, also known as post-transcriptional gene silencing (PTGS), a mechanism of plant viral defense that limits the accumulation of viral RNAs. May have RNA-binding activity. In terms of biological role, has helicase activity. It may be involved in replication. Indispensable for virus replication. Reduces the abundance of host transcripts related to jasmonic acid biosynthesis therefore altering the host defenses. In order to increase its own stability, decreases host protein degradation pathways. Its function is as follows. Indispensable for virus replication. Functionally, mediates the cap-independent, EIF4E-dependent translation of viral genomic RNAs. Binds to the cap-binding site of host EIF4E and thus interferes with the host EIF4E-dependent mRNA export and translation. VPg-RNA directly binds EIF4E and is a template for transcription. Also forms trimeric complexes with EIF4E-EIF4G, which are templates for translation. In terms of biological role, has RNA-binding and proteolytic activities. An RNA-dependent RNA polymerase that plays an essential role in the virus replication. Its function is as follows. Involved in aphid transmission, cell-to-cell and systemis movement, encapsidation of the viral RNA and in the regulation of viral RNA amplification. The protein is Genome polyprotein of Soybean mosaic virus (strain G2) (SMV).